Here is a 46-residue protein sequence, read N- to C-terminus: Putative antitoxin VapB3 (46 aa).

This sequence belongs to the UPF0165 family.

Its function is as follows. Possibly the antitoxin component of a type II toxin-antitoxin (TA) system. Its cognate toxin is VapC3 (Potential). In Pyrococcus furiosus (strain ATCC 43587 / DSM 3638 / JCM 8422 / Vc1), this protein is Putative antitoxin VapB3 (vapB3).